Reading from the N-terminus, the 782-residue chain is MQNFWFAIFFFLLTCAPPSPLSYASTVTLSRRLLYDYESPLPLPLSPISPPFFPLESSPPSPPPPLPPTPPTTFAVFPTFPANISALVLPRSSKPHHTSPTLLLPALSAVLVIATVIGLALFLYGRHRGQTRHLKNSHCSSSNTSSYGDEQSHITTNFNMAATTSPSEVFYLNTEESDHIRTGGTFFLKQDSPEIRPLPPLPPRSFHHNNYETEVNEEDEEEEEDVFFSPMASLPGSANSSPSHSCSSSCSGWVSPARSFSITMSPPNPRYSDATNLQSPSPERLRVRKNYNGNGSSSLRMFSFWNQNMGFGFPRISSASTSPDRGFIRTPLSSLYSSVSTSPDGLFRKFLDSSPPIWNDFSRNVKSVLLSHTASSRRDFVINIGESSSQQSKVPALPPPTRPPPLVPPSQPFVVQNDVKKQSFSDQPPKQLHWERLRSSSSKLSKEMVETMFIANSSNPRDLPIQNQVLDPRKAQNIATLLQLLNLSTKDVCQALLDGDCDVLGAELLECLSRLAPSKEEERKLKSFSDGSEIGPAERFLKELLHVPFVFKRVDALLFVANFHSEIKRLRKSFSVVQVACEELRNSRMFSILLEAILKTGNMMSVRTNRCGDADAFKLDTLLKLVDVKGLDGRSSLLHFVVQEMMKSEGSVRALEGIRNLNTELSNVKKSADIEYGVLRSNVSRICQGLKNIEALLLLSEESGSYGDQWLKFKERMTRFLKTAAEEIVKIKIRESSTLSALEEVTEQFHGDASKEGHTMRIFMIVRDFLSVLDQVCKEMGD.

The first 24 residues, 1 to 24 (MQNFWFAIFFFLLTCAPPSPLSYA), serve as a signal peptide directing secretion. The chain crosses the membrane as a helical span at residues 102-122 (LLLPALSAVLVIATVIGLALF). Disordered stretches follow at residues 191 to 223 (DSPE…EEEE), 264 to 287 (MSPP…RLRV), and 387 to 407 (SSSQ…PPLV). The segment covering 214–223 (EVNEEDEEEE) has biased composition (acidic residues). Pro residues predominate over residues 396–407 (ALPPPTRPPPLV). The FH2 domain occupies 406-782 (LVPPSQPFVV…LDQVCKEMGD (377 aa)).

The protein belongs to the formin-like family. Class-I subfamily.

It is found in the membrane. Its function is as follows. Might be involved in the organization and polarity of the actin cytoskeleton. This is Formin-like protein 9 (FH9) from Arabidopsis thaliana (Mouse-ear cress).